A 235-amino-acid chain; its full sequence is Mitochondrial inner membrane protease ATP23 homolog (235 aa).

A divalent metal cation is bound at residue His-114. The active site involves Glu-115. His-118 lines the a divalent metal cation pocket.

The protein belongs to the peptidase M76 family.

This is Mitochondrial inner membrane protease ATP23 homolog (atp23) from Xenopus laevis (African clawed frog).